Reading from the N-terminus, the 196-residue chain is Nucleoside triphosphate pyrophosphatase (196 aa).

The Proton acceptor role is filled by D72.

It belongs to the Maf family. A divalent metal cation serves as cofactor.

Its subcellular location is the cytoplasm. It catalyses the reaction a ribonucleoside 5'-triphosphate + H2O = a ribonucleoside 5'-phosphate + diphosphate + H(+). It carries out the reaction a 2'-deoxyribonucleoside 5'-triphosphate + H2O = a 2'-deoxyribonucleoside 5'-phosphate + diphosphate + H(+). Functionally, nucleoside triphosphate pyrophosphatase. May have a dual role in cell division arrest and in preventing the incorporation of modified nucleotides into cellular nucleic acids. This Chlamydia muridarum (strain MoPn / Nigg) protein is Nucleoside triphosphate pyrophosphatase.